Consider the following 67-residue polypeptide: Conotoxin ArMLKM-01 (67 aa).

The first 24 residues, 1 to 24, serve as a signal peptide directing secretion; that stretch reads MLKMEVVLFTFLVLFPLSTLQLET. A propeptide spanning residues 25 to 51 is cleaved from the precursor; that stretch reads DQPVERYVENKQDLNPDESRNFMLPIV. 3 cysteine pairs are disulfide-bonded: Cys-54–Cys-65, Cys-55–Cys-63, and Cys-58–Cys-66.

This sequence belongs to the conotoxin M superfamily. In terms of tissue distribution, expressed by the venom duct.

Its subcellular location is the secreted. This is Conotoxin ArMLKM-01 from Conus arenatus (Sand-dusted cone).